A 1693-amino-acid chain; its full sequence is Latrophilin Cirl (1693 aa).

Topologically, residues 1–774 are extracellular; sequence MVLQGAKQRL…LFTMFDGNMR (774 aa). The region spanning 30–119 is the SUEL-type lectin domain; the sequence is ACEGKKLTIE…KYLEAHYQCV (90 aa). Asn-147, Asn-260, Asn-306, and Asn-345 each carry an N-linked (GlcNAc...) asparagine glycan. The tract at residues 190 to 309 is disordered; it reads PPATHATPPG…GPSVSSNGSA (120 aa). Composition is skewed to polar residues over residues 259–269 and 287–309; these read SNATAPSNTRI and KSSP…NGSA. Residues 379-406 are disordered; it reads SFDEDDEEMAGTSTTTPMSTSGDCLHNS. Low complexity predominate over residues 390 to 399; that stretch reads TSTTTPMSTS. 4 N-linked (GlcNAc...) asparagine glycosylation sites follow: Asn-405, Asn-662, Asn-710, and Asn-737. In terms of domain architecture, GAIN-B spans 568–761; sequence RSVVQKVKNI…AILMDVVDEH (194 aa). Disulfide bonds link Cys-716–Cys-743 and Cys-731–Cys-745. Residues 716-761 form a GPS region; the sequence is CVFWNYIDHAWSANGCSLESTNRTHSVCSCNHLTNFAILMDVVDEH. The chain crosses the membrane as a helical span at residues 775–795; sequence IFIYISIAICVVFIVIALLTL. Residues 796–808 are Cytoplasmic-facing; that stretch reads KLFNGVFVKSART. The chain crosses the membrane as a helical span at residues 809–829; that stretch reads SIYINIYICLLAIELLFLLGI. The Extracellular portion of the chain corresponds to 830–835; that stretch reads EQTETS. A helical membrane pass occupies residues 836 to 856; that stretch reads IFCGFITVFLHCAILSGTSWF. Residues 857–882 are Cytoplasmic-facing; sequence CYEAFHSYSTLTSDELLLEVDQTPKV. Residues 883 to 903 form a helical membrane-spanning segment; that stretch reads NCYYLLSYGLSLSVVAISLVI. Over 904-927 the chain is Extracellular; it reads NPSTYTQNDYCVLMEANAVFYATF. The helical transmembrane segment at 928 to 948 threads the bilayer; it reads VAPVLIFFMAAIGYTFLSWII. Residues 949–975 are Cytoplasmic-facing; the sequence is MCRKSRTGLKTKEHTRLATVRFDIRCS. The helical transmembrane segment at 976-996 threads the bilayer; the sequence is FVFFLLLSAVWCSAYFYLRGA. At 997 to 1003 the chain is on the extracellular side; it reads KMDEDVT. Residues 1004–1024 form a helical membrane-spanning segment; it reads GIYGYNFICFNTLLGLYIFVF. At 1025 to 1693 the chain is on the cytoplasmic side; it reads HCIQNEKIRR…VRCYLEPLAK (669 aa). Residues 1089–1109 are disordered; it reads PLGTNDDAHDEQQQQQHMSAT. A phosphoserine mark is found at Ser-1165, Ser-1256, and Ser-1263. Disordered regions lie at residues 1237 to 1264, 1279 to 1362, 1450 to 1529, and 1596 to 1678; these read KPNS…LHSR, KTKP…APPP, SRYG…LPPQ, and SMRG…SAML. Over residues 1307 to 1323 the composition is skewed to low complexity; it reads QQQQQLRQQRQQQQQQL. Phosphoserine occurs at positions 1324 and 1325. Residues 1337–1357 are compositionally biased toward low complexity; sequence LHLQHQQQQQQQRRAGGQQQL. Polar residues predominate over residues 1464–1475; it reads RNQQQQQHSLAQ. Composition is skewed to acidic residues over residues 1485–1498 and 1508–1521; these read DEDD…EETT and CDEE…DMED. Positions 1640–1663 are enriched in low complexity; it reads QQLQKLSPQSTTSSSSHTSHSNPH.

This sequence belongs to the G-protein coupled receptor 2 family. LN-TM7 subfamily. As to quaternary structure, forms a heterodimer, consisting of a large extracellular region non-covalently linked to a seven-transmembrane moiety. Proteolytically cleaved into 2 subunits, an extracellular subunit and a seven-transmembrane subunit.

Its subcellular location is the cell membrane. This chain is Latrophilin Cirl, found in Drosophila pseudoobscura pseudoobscura (Fruit fly).